Reading from the N-terminus, the 225-residue chain is Small ribosomal subunit protein uS3 (225 aa).

A KH type-2 domain is found at 18–87 (VDEYLAKQFY…NPQITVTSVE (70 aa)).

It belongs to the universal ribosomal protein uS3 family. As to quaternary structure, part of the 30S ribosomal subunit.

In terms of biological role, binds the lower part of the 30S subunit head. This chain is Small ribosomal subunit protein uS3, found in Sulfurisphaera tokodaii (strain DSM 16993 / JCM 10545 / NBRC 100140 / 7) (Sulfolobus tokodaii).